A 232-amino-acid chain; its full sequence is Large ribosomal subunit protein uL1 (232 aa).

Belongs to the universal ribosomal protein uL1 family. As to quaternary structure, part of the 50S ribosomal subunit.

Functionally, binds directly to 23S rRNA. The L1 stalk is quite mobile in the ribosome, and is involved in E site tRNA release. In terms of biological role, protein L1 is also a translational repressor protein, it controls the translation of the L11 operon by binding to its mRNA. The protein is Large ribosomal subunit protein uL1 of Colwellia psychrerythraea (strain 34H / ATCC BAA-681) (Vibrio psychroerythus).